A 93-amino-acid chain; its full sequence is Acylphosphatase (93 aa).

An intrachain disulfide couples Cys5 to Cys49. Residues 5–93 enclose the Acylphosphatase-like domain; sequence CIIAWVYGRV…ETLTGFSIRY (89 aa). Active-site residues include Arg20 and Asn38.

It belongs to the acylphosphatase family.

The catalysed reaction is an acyl phosphate + H2O = a carboxylate + phosphate + H(+). This chain is Acylphosphatase, found in Salmonella typhi.